A 341-amino-acid polypeptide reads, in one-letter code: Heterogeneous nuclear ribonucleoproteins A2/B1 (341 aa).

RRM domains are found at residues 9-92 (RKLF…ESGK) and 100-179 (KKLF…LSRQ). Lysine 10 participates in a covalent cross-link: Glycyl lysine isopeptide (Lys-Gly) (interchain with G-Cter in SUMO2). Phosphoserine is present on serine 17. Arginine 26 is modified (omega-N-methylarginine). Phosphoserine is present on serine 73. Position 92 is an N6,N6-dimethyllysine; alternate (lysine 92). A Glycyl lysine isopeptide (Lys-Gly) (interchain with G-Cter in SUMO2); alternate cross-link involves residue lysine 92. Residues lysine 100, lysine 108, and lysine 125 each participate in a glycyl lysine isopeptide (Lys-Gly) (interchain with G-Cter in SUMO2) cross-link. The residue at position 128 (threonine 128) is a Phosphothreonine. A Phosphoserine modification is found at serine 137. Residue lysine 140 forms a Glycyl lysine isopeptide (Lys-Gly) (interchain with G-Cter in SUMO2) linkage. Threonine 147 bears the Phosphothreonine mark. Residues lysine 156 and lysine 161 each participate in a glycyl lysine isopeptide (Lys-Gly) (interchain with G-Cter in SUMO2); alternate cross-link. N6-acetyllysine; alternate occurs at positions 156 and 161. Threonine 164 is modified (phosphothreonine). A Glycyl lysine isopeptide (Lys-Gly) (interchain with G-Cter in SUMO2) cross-link involves residue lysine 174. Phosphoserine occurs at positions 177 and 189. Positions 181 to 341 (MQEVQSSRSG…SGGYGGRSRY (161 aa)) are disordered. The span at 190 to 211 (GRGGNFGFGDSRGGGGNFGPGP) shows a compositional bias: gly residues. The residue at position 191 (arginine 191) is an Asymmetric dimethylarginine; alternate. Arginine 191 carries the dimethylated arginine; alternate modification. Arginine 191 bears the Omega-N-methylarginine; alternate mark. The residue at position 200 (serine 200) is a Phosphoserine. Arginine 201 is subject to Asymmetric dimethylarginine; alternate. Arginine 201 is modified (dimethylated arginine; alternate). Arginine 201 bears the Omega-N-methylarginine; alternate mark. At serine 213 the chain carries Phosphoserine. Residue arginine 216 is modified to Omega-N-methylarginine. Residues serine 219 and serine 224 each carry the phosphoserine modification. Position 226 is an omega-N-methylarginine (arginine 226). Serine 247 carries the phosphoserine modification. The residue at position 254 (arginine 254) is an Asymmetric dimethylarginine; alternate. At arginine 254 the chain carries Omega-N-methylarginine; alternate. The nuclear targeting sequence stretch occupies residues 296 to 335 (QQPSNYGPMKSGNFGGSRNMGGPYGGGNYGPGGSGGSGGY). Gly residues predominate over residues 308 to 341 (NFGGSRNMGGPYGGGNYGPGGSGGSGGYGGRSRY). At serine 312 the chain carries Phosphoserine. At arginine 313 the chain carries Omega-N-methylarginine. Tyrosine 319 is subject to Phosphotyrosine. Serine 329 and serine 332 each carry phosphoserine. Tyrosine 335 bears the Phosphotyrosine mark. Arginine 338 is modified (omega-N-methylarginine).

In terms of assembly, identified in the spliceosome C complex. Identified in a IGF2BP1-dependent mRNP granule complex containing untranslated mRNAs. Interacts with IGF2BP1. Interacts with C9orf72. Interacts with DGCR8. Interacts with TARDBP. Interacts with CKAP5. Interacts with PPIA/CYPA. Interacts (via C-terminus) with FAM76B; the interaction results in retention of HNRNPA2B1 in the nucleus and inhibition of the NF-kappa-B-mediated inflammatory pathway. Interacts with NF-kappa-B inhibitors NFKBIA and NFKBIE; the interaction may be mediated by the RRM2 domain of HNRNPA2B1, and HNRNPA2B1 may interact simultaneously with FAM76B and either NFKBIA or NFKBIE to form a complex. Post-translationally, sumoylated in exosomes, promoting miRNAs-binding. Asymmetric dimethylation at Arg-254 constitutes the major methylation site. According to a report, methylation affects subcellular location and promotes nuclear localization. According to another report, methylation at Arg-254 does not influence nucleocytoplasmic shuttling.

The protein resides in the nucleus. The protein localises to the nucleoplasm. It is found in the cytoplasmic granule. Its subcellular location is the secreted. It localises to the extracellular exosome. Functionally, heterogeneous nuclear ribonucleoprotein (hnRNP) that associates with nascent pre-mRNAs, packaging them into hnRNP particles. The hnRNP particle arrangement on nascent hnRNA is non-random and sequence-dependent and serves to condense and stabilize the transcripts and minimize tangling and knotting. Packaging plays a role in various processes such as transcription, pre-mRNA processing, RNA nuclear export, subcellular location, mRNA translation and stability of mature mRNAs. Forms hnRNP particles with at least 20 other different hnRNP and heterogeneous nuclear RNA in the nucleus. Involved in transport of specific mRNAs to the cytoplasm in oligodendrocytes and neurons: acts by specifically recognizing and binding the A2RE (21 nucleotide hnRNP A2 response element) or the A2RE11 (derivative 11 nucleotide oligonucleotide) sequence motifs present on some mRNAs, and promotes their transport to the cytoplasm. Specifically binds single-stranded telomeric DNA sequences, protecting telomeric DNA repeat against endonuclease digestion. Also binds other RNA molecules, such as primary miRNA (pri-miRNAs): acts as a nuclear 'reader' of the N6-methyladenosine (m6A) mark by specifically recognizing and binding a subset of nuclear m6A-containing pri-miRNAs. Binding to m6A-containing pri-miRNAs promotes pri-miRNA processing by enhancing binding of DGCR8 to pri-miRNA transcripts. Involved in miRNA sorting into exosomes following sumoylation, possibly by binding (m6A)-containing pre-miRNAs. Acts as a regulator of efficiency of mRNA splicing, possibly by binding to m6A-containing pre-mRNAs. Plays a role in the splicing of pyruvate kinase PKM by binding repressively to sequences flanking PKM exon 9, inhibiting exon 9 inclusion and resulting in exon 10 inclusion and production of the PKM M2 isoform. This Bos taurus (Bovine) protein is Heterogeneous nuclear ribonucleoproteins A2/B1 (HNRNPA2B1).